The chain runs to 333 residues: Adenosine deaminase (333 aa).

Residues histidine 12 and histidine 14 each contribute to the Zn(2+) site. Substrate contacts are provided by histidine 14, aspartate 16, and glycine 170. Position 197 (histidine 197) interacts with Zn(2+). Glutamate 200 serves as the catalytic Proton donor. Residue aspartate 278 participates in Zn(2+) binding. Position 279 (aspartate 279) interacts with substrate.

Belongs to the metallo-dependent hydrolases superfamily. Adenosine and AMP deaminases family. Adenosine deaminase subfamily. The cofactor is Zn(2+).

It catalyses the reaction adenosine + H2O + H(+) = inosine + NH4(+). It carries out the reaction 2'-deoxyadenosine + H2O + H(+) = 2'-deoxyinosine + NH4(+). Its function is as follows. Catalyzes the hydrolytic deamination of adenosine and 2-deoxyadenosine. The polypeptide is Adenosine deaminase (Aliivibrio fischeri (strain MJ11) (Vibrio fischeri)).